A 123-amino-acid chain; its full sequence is Small ribosomal subunit protein uS12 (123 aa).

Asp-89 carries the post-translational modification 3-methylthioaspartic acid. Residues 101 to 123 (SLDTSGVKDRKQGRSKYGAKRPK) are disordered. Basic residues predominate over residues 113–123 (GRSKYGAKRPK).

This sequence belongs to the universal ribosomal protein uS12 family. In terms of assembly, part of the 30S ribosomal subunit. Contacts proteins S8 and S17. May interact with IF1 in the 30S initiation complex.

Functionally, with S4 and S5 plays an important role in translational accuracy. Its function is as follows. Interacts with and stabilizes bases of the 16S rRNA that are involved in tRNA selection in the A site and with the mRNA backbone. Located at the interface of the 30S and 50S subunits, it traverses the body of the 30S subunit contacting proteins on the other side and probably holding the rRNA structure together. The combined cluster of proteins S8, S12 and S17 appears to hold together the shoulder and platform of the 30S subunit. The polypeptide is Small ribosomal subunit protein uS12 (Stutzerimonas stutzeri (strain A1501) (Pseudomonas stutzeri)).